A 469-amino-acid chain; its full sequence is Spermatogenesis-associated protein 21 (469 aa).

Disordered stretches follow at residues methionine 1–glutamine 76 and histidine 99–proline 157. Over residues glutamate 49–arginine 61 the composition is skewed to basic and acidic residues. Residues alanine 62–alanine 73 show a composition bias toward low complexity. A compositionally biased stretch (polar residues) spans alanine 105–alanine 132. Over residues alanine 146–proline 157 the composition is skewed to pro residues. Positions glutamate 198–alanine 225 form a coiled coil. The 36-residue stretch at valine 255 to phenylalanine 290 folds into the EF-hand domain. Ca(2+) contacts are provided by aspartate 268, asparagine 270, aspartate 272, arginine 274, and aspartate 279. Residues tyrosine 424 to histidine 469 form a disordered region. A compositionally biased stretch (basic and acidic residues) spans asparagine 450–lysine 459.

Involved in the differentiation of haploid spermatids. The sequence is that of Spermatogenesis-associated protein 21 (SPATA21) from Homo sapiens (Human).